The chain runs to 248 residues: UPF0246 protein RF_0769 (248 aa).

This sequence belongs to the UPF0246 family.

This Rickettsia felis (strain ATCC VR-1525 / URRWXCal2) (Rickettsia azadi) protein is UPF0246 protein RF_0769.